Here is a 175-residue protein sequence, read N- to C-terminus: Bifunctional protein PyrR (175 aa).

Positions 98-110 (VIIIDDVLYTGRT) match the PRPP-binding motif.

It belongs to the purine/pyrimidine phosphoribosyltransferase family. PyrR subfamily. Homodimer and homohexamer; in equilibrium.

It catalyses the reaction UMP + diphosphate = 5-phospho-alpha-D-ribose 1-diphosphate + uracil. Its function is as follows. Regulates transcriptional attenuation of the pyrimidine nucleotide (pyr) operon by binding in a uridine-dependent manner to specific sites on pyr mRNA. This disrupts an antiterminator hairpin in the RNA and favors formation of a downstream transcription terminator, leading to a reduced expression of downstream genes. Also displays a weak uracil phosphoribosyltransferase activity which is not physiologically significant. The polypeptide is Bifunctional protein PyrR (Staphylococcus carnosus (strain TM300)).